Consider the following 179-residue polypeptide: MSVENLKNSLPEYAKDLKLNLSSIARTTVLNEQQLWGTLLATAAATKSASTLKEIASEAADNLSAEAYNAALGAASIMGMNNVFYRTKGYLDGKYDDLRAGLRMNIIGNPGVDKADFELWSLAVSAINGCNHCLEAHENTLRQEGVDREVIFEAIRAGSIVAGVAQAVEANEILSAAQV.

The active-site Proton donor is Cys-130. A disulfide bridge connects residues Cys-130 and Cys-133. Cys-133 acts as the Cysteine sulfenic acid (-SOH) intermediate in catalysis.

The protein belongs to the AhpD family. Homotrimer.

It catalyses the reaction N(6)-[(R)-dihydrolipoyl]-L-lysyl-[lipoyl-carrier protein] + a hydroperoxide = N(6)-[(R)-lipoyl]-L-lysyl-[lipoyl-carrier protein] + an alcohol + H2O. In terms of biological role, antioxidant protein with alkyl hydroperoxidase activity. Required for the reduction of the AhpC active site cysteine residues and for the regeneration of the AhpC enzyme activity. In Rhodococcus erythropolis (strain PR4 / NBRC 100887), this protein is Alkyl hydroperoxide reductase AhpD.